Here is a 274-residue protein sequence, read N- to C-terminus: Methionine aminopeptidase B (274 aa).

His-102 lines the substrate pocket. A divalent metal cation is bound by residues Asp-120, Asp-131, and His-194. Residue His-201 coordinates substrate. A divalent metal cation contacts are provided by Glu-227 and Glu-258.

Belongs to the peptidase M24A family. Methionine aminopeptidase type 1 subfamily. In terms of assembly, monomer. Co(2+) serves as cofactor. The cofactor is Zn(2+). It depends on Mn(2+) as a cofactor. Fe(2+) is required as a cofactor.

The catalysed reaction is Release of N-terminal amino acids, preferentially methionine, from peptides and arylamides.. Functionally, removes the N-terminal methionine from nascent proteins. The N-terminal methionine is often cleaved when the second residue in the primary sequence is small and uncharged (Met-Ala-, Cys, Gly, Pro, Ser, Thr, or Val). Requires deformylation of the N(alpha)-formylated initiator methionine before it can be hydrolyzed. This is Methionine aminopeptidase B from Synechocystis sp. (strain ATCC 27184 / PCC 6803 / Kazusa).